The following is a 777-amino-acid chain: Nuclear autoantigenic sperm protein (777 aa).

The residue at position 2 (Ala-2) is an N-acetylalanine. Lys-34 bears the N6-acetyllysine mark. The stretch at 44–77 is one TPR 1 repeat; that stretch reads AKKLLGLGQKHLVMGDIPAAVNAFQEAASLLGKK. The tract at residues 117 to 128 is histone-binding; it reads EEEEGEKTEEES. Thr-124 bears the Phosphothreonine mark. A Phosphoserine modification is found at Ser-128. Basic and acidic residues-rich tracts occupy residues 152 to 186, 227 to 259, and 267 to 276; these read MGEK…REDM, VTSK…EKGG, and IEEKPKEASK. The interval 152-496 is disordered; sequence MGEKEAQKTE…ALENKSLQEN (345 aa). The segment at 211 to 244 is histone-binding; the sequence is EEGKGAAAPEGLSEAEVTSKKPDQEIPGAEEGKS. Lys-243 bears the N6-acetyllysine mark. Position 244 is a phosphoserine (Ser-244). Residue Lys-285 is modified to N6-acetyllysine. Basic and acidic residues predominate over residues 303 to 319; the sequence is DEPKEQVAASESERGKA. Phosphoserine is present on Ser-312. Residues 342–353 are compositionally biased toward low complexity; it reads AADASAAEAGSE. Phosphoserine occurs at positions 399, 411, and 440. The segment at 458–501 is histone-binding; that stretch reads EQMKEGEETEGSEEEDKENDKAEETLNDSALENKSLQENEEEEI. A compositionally biased stretch (acidic residues) spans 464 to 474; it reads EETEGSEEEDK. Phosphothreonine is present on Thr-466. 3 positions are modified to phosphoserine: Ser-469, Ser-486, and Ser-492. Residues 484–493 show a composition bias toward polar residues; that stretch reads NDSALENKSL. TPR repeat units follow at residues 531 to 564 and 573 to 606; these read AQAH…QEQY and AETH…IEKR. A coiled-coil region spans residues 593–648; sequence VAQFSKSIEVIEKRMAVLNEQMKEAEGSPTEYEKEIEELKELLPEIREKIEDAKES. Residue Ser-651 is modified to Phosphoserine. Low complexity predominate over residues 667–681; sequence STSGFTPSGGSSSVS. The interval 667 to 777 is disordered; the sequence is STSGFTPSGG…AGATVESTAC (111 aa). Thr-672 carries the post-translational modification Phosphothreonine. A phosphoserine mark is found at Ser-694 and Ser-695. A Nuclear localization signal motif is present at residues 705–711; that stretch reads VRKKRKP. Positions 710 to 728 are enriched in basic and acidic residues; the sequence is KPEEESPRKDDAKKAKQEP. Phosphoserine is present on Ser-715. Residue Lys-725 forms a Glycyl lysine isopeptide (Lys-Gly) (interchain with G-Cter in SUMO1) linkage. Residue Ser-734 is modified to Phosphoserine.

Belongs to the NASP family. Binds to linker H1 histones. Interacts with histones H2A, H2B, H3 and H4. Interacts with histone H3.3. Interacts with histones H3 and H4; NASP is a histone chaperone that stabilizes and maintains a soluble pool of histone H3-H4 dimers. Interacts with ASF1A and ASF1B; the interaction is probably indirect and mediated by H3-H4. Also binds to HSP90 in the cytoplasm. This interaction stimulates binding of NASP to H1-6/H1T.

The protein localises to the cytoplasm. Its subcellular location is the nucleus. Component of the histone chaperone network. Binds and stabilizes histone H3-H4 not bound to chromatin to maintain a soluble reservoir and modulate degradation by chaperone-mediated autophagy. Required for DNA replication, normal cell cycle progression and cell proliferation. Forms a cytoplasmic complex with HSP90 and H1 linker histones and stimulates HSP90 ATPase activity. NASP and H1 histone are subsequently released from the complex and translocate to the nucleus where the histone is released for binding to DNA. This chain is Nuclear autoantigenic sperm protein, found in Bos taurus (Bovine).